The following is a 58-amino-acid chain: Sperm protamine P1 (58 aa).

The tract at residues 1–58 (MARYRRRSRSRSRSRYGRRRRRSRSRRRRSRRRRRRRGRRGRGYHRRSPHRRRRRRRR) is disordered.

Belongs to the protamine P1 family. As to expression, testis.

It localises to the nucleus. It is found in the chromosome. Its function is as follows. Protamines substitute for histones in the chromatin of sperm during the haploid phase of spermatogenesis. They compact sperm DNA into a highly condensed, stable and inactive complex. This is Sperm protamine P1 (PRM1) from Monodelphis domestica (Gray short-tailed opossum).